An 88-amino-acid chain; its full sequence is Small ribosomal subunit protein bS20 (88 aa).

Positions 1–20 (MANIKQQKKRNKTNEKRRLR) are disordered.

It belongs to the bacterial ribosomal protein bS20 family.

Functionally, binds directly to 16S ribosomal RNA. This chain is Small ribosomal subunit protein bS20, found in Phytoplasma australiense.